A 355-amino-acid polypeptide reads, in one-letter code: Guanine nucleotide-binding protein G(z) subunit alpha (355 aa).

Over residues 1–14 (MGCRQSSEEKEAAR) the composition is skewed to basic and acidic residues. The interval 1 to 26 (MGCRQSSEEKEAARRSRRIDRHLRSE) is disordered. The N-myristoyl glycine moiety is linked to residue G2. A lipid anchor (S-palmitoyl cysteine) is attached at C3. The region spanning 32–355 (REIKLLLLGT…QNNLKYIGLC (324 aa)) is the G-alpha domain. Residues 35-48 (KLLLLGTSNSGKST) form a G1 motif region. GTP is bound by residues 40–47 (GTSNSGKS), 176–182 (LRSRDMT), 201–205 (DVGGQ), 270–273 (NKKD), and A327. The Mg(2+) site is built by S47 and T182. The G2 motif stretch occupies residues 174-182 (DILRSRDMT). The segment at 197–206 (FKMVDVGGQR) is G3 motif. Positions 266–273 (ILFLNKKD) are G4 motif. The interval 325–330 (TCATDT) is G5 motif.

This sequence belongs to the G-alpha family. G(i/o/t/z) subfamily. G-proteins are composed of 3 units; alpha, beta and gamma. The alpha chain contains the guanine nucleotide binding site. Interacts with ADGRB2.

It localises to the membrane. Guanine nucleotide-binding proteins (G proteins) are involved as modulators or transducers in various transmembrane signaling systems. The protein is Guanine nucleotide-binding protein G(z) subunit alpha (Gnaz) of Mus musculus (Mouse).